The following is a 347-amino-acid chain: GTPase Obg (347 aa).

Residues 1-158 (MFIDNVKLVL…LSVRLELKLI (158 aa)) enclose the Obg domain. The OBG-type G domain occupies 159–339 (ADVGLVGFPN…LKFMLLEEVK (181 aa)). GTP is bound by residues 165–172 (GFPNVGKS), 190–194 (FTTLT), 212–215 (DIPG), 280–283 (SKSD), and 320–322 (SSL). Positions 172 and 192 each coordinate Mg(2+).

This sequence belongs to the TRAFAC class OBG-HflX-like GTPase superfamily. OBG GTPase family. As to quaternary structure, monomer. The cofactor is Mg(2+).

The protein resides in the cytoplasm. Functionally, an essential GTPase which binds GTP, GDP and possibly (p)ppGpp with moderate affinity, with high nucleotide exchange rates and a fairly low GTP hydrolysis rate. Plays a role in control of the cell cycle, stress response, ribosome biogenesis and in those bacteria that undergo differentiation, in morphogenesis control. This Campylobacter lari (strain RM2100 / D67 / ATCC BAA-1060) protein is GTPase Obg.